Here is a 147-residue protein sequence, read N- to C-terminus: Hemoglobin subunit epsilon (147 aa).

Positions 3-147 (HFTAEEKAAV…VAIALAHKYH (145 aa)) constitute a Globin domain. Residues serine 14 and serine 51 each carry the phosphoserine modification. Heme b-binding residues include histidine 64 and histidine 93.

The protein belongs to the globin family. As to quaternary structure, heterotetramer of two alpha chains and two epsilon chains in early embryonic hemoglobin Gower-2; two zeta chains and two epsilon chains in early embryonic hemoglobin Gower-1. As to expression, red blood cells.

Functionally, the epsilon chain is a beta-type chain of early mammalian embryonic hemoglobin. The chain is Hemoglobin subunit epsilon (HBE1) from Symphalangus syndactylus (Siamang).